A 340-amino-acid chain; its full sequence is Probable dual-specificity RNA methyltransferase RlmN (340 aa).

E91 serves as the catalytic Proton acceptor. Positions 97 to 326 (HSGRVTACIS…CEIRKEKGTD (230 aa)) constitute a Radical SAM core domain. C104 and C331 form a disulfide bridge. [4Fe-4S] cluster is bound by residues C111, C115, and C118. S-adenosyl-L-methionine contacts are provided by residues 158–159 (GE), S190, 213–215 (SLH), and N289. Catalysis depends on C331, which acts as the S-methylcysteine intermediate.

It belongs to the radical SAM superfamily. RlmN family. [4Fe-4S] cluster is required as a cofactor.

It localises to the cytoplasm. The enzyme catalyses adenosine(2503) in 23S rRNA + 2 reduced [2Fe-2S]-[ferredoxin] + 2 S-adenosyl-L-methionine = 2-methyladenosine(2503) in 23S rRNA + 5'-deoxyadenosine + L-methionine + 2 oxidized [2Fe-2S]-[ferredoxin] + S-adenosyl-L-homocysteine. It catalyses the reaction adenosine(37) in tRNA + 2 reduced [2Fe-2S]-[ferredoxin] + 2 S-adenosyl-L-methionine = 2-methyladenosine(37) in tRNA + 5'-deoxyadenosine + L-methionine + 2 oxidized [2Fe-2S]-[ferredoxin] + S-adenosyl-L-homocysteine. Specifically methylates position 2 of adenine 2503 in 23S rRNA and position 2 of adenine 37 in tRNAs. The chain is Probable dual-specificity RNA methyltransferase RlmN from Thermosipho melanesiensis (strain DSM 12029 / CIP 104789 / BI429).